The following is a 493-amino-acid chain: Cytochrome P450 2E1 (493 aa).

Position 298–303 (298–303) interacts with substrate; that stretch reads FAGTET. A heme-binding site is contributed by Cys437.

This sequence belongs to the cytochrome P450 family. As to quaternary structure, interacts with chaperones HSP70 and HSP90; this interaction is required for initial targeting to mitochondria. It depends on heme as a cofactor. Highest level in the liver and to a lesser extent in the kidney, with a higher level in the male kidney than in the female.

It localises to the endoplasmic reticulum membrane. It is found in the microsome membrane. The protein resides in the mitochondrion inner membrane. It carries out the reaction an organic molecule + reduced [NADPH--hemoprotein reductase] + O2 = an alcohol + oxidized [NADPH--hemoprotein reductase] + H2O + H(+). The enzyme catalyses (5Z,8Z,11Z)-eicosatrienoate + reduced [NADPH--hemoprotein reductase] + O2 = 19-hydroxy-(5Z,8Z,11Z)-eicosatrienoate + oxidized [NADPH--hemoprotein reductase] + H2O + H(+). It catalyses the reaction (5Z,8Z,11Z,14Z,17Z)-eicosapentaenoate + reduced [NADPH--hemoprotein reductase] + O2 = 19-hydroxy-(5Z,8Z,11Z,14Z,17Z)-eicosapentaenoate + oxidized [NADPH--hemoprotein reductase] + H2O + H(+). The catalysed reaction is (4Z,7Z,10Z,13Z,16Z,19Z)-docosahexaenoate + reduced [NADPH--hemoprotein reductase] + O2 = 21-hydroxy-(4Z,7Z,10Z,13Z,16Z,19Z)-docosahexaenoate + oxidized [NADPH--hemoprotein reductase] + H2O + H(+). It carries out the reaction dodecanoate + reduced [NADPH--hemoprotein reductase] + O2 = 11-hydroxydodecanoate + oxidized [NADPH--hemoprotein reductase] + H2O + H(+). The enzyme catalyses tetradecanoate + reduced [NADPH--hemoprotein reductase] + O2 = 13-hydroxytetradecanoate + oxidized [NADPH--hemoprotein reductase] + H2O + H(+). It catalyses the reaction 4-nitrophenol + NADPH + O2 + H(+) = 4-nitrocatechol + NADP(+) + H2O. It participates in lipid metabolism; fatty acid metabolism. The omega-1 hydroxylase activity is stimulated by cytochrome b5. Functionally, a cytochrome P450 monooxygenase involved in the metabolism of fatty acids. Mechanistically, uses molecular oxygen inserting one oxygen atom into a substrate, and reducing the second into a water molecule, with two electrons provided by NADPH via cytochrome P450 reductase (NADPH--hemoprotein reductase). Catalyzes the hydroxylation of carbon-hydrogen bonds. Hydroxylates fatty acids specifically at the omega-1 position displaying the highest catalytic activity for saturated fatty acids. May be involved in the oxidative metabolism of xenobiotics. In Mus musculus (Mouse), this protein is Cytochrome P450 2E1 (Cyp2e1).